We begin with the raw amino-acid sequence, 154 residues long: Endoribonuclease YbeY (154 aa).

Residues His-114, His-118, and His-124 each contribute to the Zn(2+) site.

The protein belongs to the endoribonuclease YbeY family. Zn(2+) serves as cofactor.

It is found in the cytoplasm. In terms of biological role, single strand-specific metallo-endoribonuclease involved in late-stage 70S ribosome quality control and in maturation of the 3' terminus of the 16S rRNA. The protein is Endoribonuclease YbeY of Aggregatibacter actinomycetemcomitans (Actinobacillus actinomycetemcomitans).